The sequence spans 441 residues: Zinc finger and BTB domain-containing protein 8A (441 aa).

The BTB domain occupies 24-92; that stretch reads CDCSILVEGK…VYSGKLSLTG (69 aa). The disordered stretch occupies residues 135–248; it reads LSDKDTGSNG…HVSQSEEQVQ (114 aa). Phosphoserine is present on residues Ser161 and Ser167. Residues Lys178, Lys182, and Lys199 each participate in a glycyl lysine isopeptide (Lys-Gly) (interchain with G-Cter in SUMO2) cross-link. 2 stretches are compositionally biased toward basic and acidic residues: residues 198 to 208 and 227 to 242; these read AKHEQRKDPIK and GKGDARTSDSGHHVSQ. 2 consecutive C2H2-type zinc fingers follow at residues 282-304 and 310-333; these read FKCPYCTHVVKRKADLKRHLRCH and YPCQACGKRFSRLDHLSSHFRTIH. A Glycyl lysine isopeptide (Lys-Gly) (interchain with G-Cter in SUMO2) cross-link involves residue Lys437.

The protein resides in the nucleus. In terms of biological role, may be involved in transcriptional regulation. The chain is Zinc finger and BTB domain-containing protein 8A (Zbtb8a) from Rattus norvegicus (Rat).